The sequence spans 415 residues: Serine hydroxymethyltransferase (415 aa).

(6S)-5,6,7,8-tetrahydrofolate-binding positions include L117 and 121-123 (GHL). Position 225 is an N6-(pyridoxal phosphate)lysine (K225). (6S)-5,6,7,8-tetrahydrofolate contacts are provided by residues E241 and 349–351 (SPF).

This sequence belongs to the SHMT family. Homodimer. Pyridoxal 5'-phosphate serves as cofactor.

The protein resides in the cytoplasm. It carries out the reaction (6R)-5,10-methylene-5,6,7,8-tetrahydrofolate + glycine + H2O = (6S)-5,6,7,8-tetrahydrofolate + L-serine. The protein operates within one-carbon metabolism; tetrahydrofolate interconversion. Its pathway is amino-acid biosynthesis; glycine biosynthesis; glycine from L-serine: step 1/1. Functionally, catalyzes the reversible interconversion of serine and glycine with tetrahydrofolate (THF) serving as the one-carbon carrier. This reaction serves as the major source of one-carbon groups required for the biosynthesis of purines, thymidylate, methionine, and other important biomolecules. Also exhibits THF-independent aldolase activity toward beta-hydroxyamino acids, producing glycine and aldehydes, via a retro-aldol mechanism. This Campylobacter hominis (strain ATCC BAA-381 / DSM 21671 / CCUG 45161 / LMG 19568 / NCTC 13146 / CH001A) protein is Serine hydroxymethyltransferase.